The following is a 416-amino-acid chain: MMTRMELRPLEIGFSKALTEVAPVTCQCECWDHNLCSSQASEMDLIYQSQDTHSCASKQDAVFQLLSETKIPVPNRYRKISHRLSTLSNKKTLKSQLDRFLSSSKKLHNDDVNRGDYCFLLSTPVECSASTNSHSYDCLWNFSCNSFPEYSSYSASETSSVASYSYYSGPNPATPSSSSCNLVNANSLDIYLNINNLKKSKSVPRLRGQFMEPVEHNHPLSKSLEEQSSFLEQSKDASSNLTACNRSGSSLSSNFYSSRLSKKTSLASLNKSRASLQHKIMSLSRNIIRRVFHKPEVHLDPSASILNLSSSHGESNLTNGLLCQNFKLFQDDWLMEDCAPDANFTLYTPLQPWEKRSVKPEIRRPRLNPNFFRVFVLEAQMRRAGKLSANTAGRAQLIYLPKPAVTFSTSPLHVEL.

Its subcellular location is the cytoplasm. Functionally, may have a role in meiosis and sporulation. The polypeptide is Meiotically up-regulated protein PB1A10.08 (Schizosaccharomyces pombe (strain 972 / ATCC 24843) (Fission yeast)).